A 136-amino-acid chain; its full sequence is Ribosome-binding factor A (136 aa).

It belongs to the RbfA family. Monomer. Binds 30S ribosomal subunits, but not 50S ribosomal subunits or 70S ribosomes.

It localises to the cytoplasm. In terms of biological role, one of several proteins that assist in the late maturation steps of the functional core of the 30S ribosomal subunit. Associates with free 30S ribosomal subunits (but not with 30S subunits that are part of 70S ribosomes or polysomes). Required for efficient processing of 16S rRNA. May interact with the 5'-terminal helix region of 16S rRNA. In Cellvibrio japonicus (strain Ueda107) (Pseudomonas fluorescens subsp. cellulosa), this protein is Ribosome-binding factor A.